A 115-amino-acid chain; its full sequence is Phosphoribosyl-AMP cyclohydrolase (115 aa).

Position 80 (D80) interacts with Mg(2+). C81 contributes to the Zn(2+) binding site. D82 and D84 together coordinate Mg(2+). Zn(2+)-binding residues include C97 and C104.

The protein belongs to the PRA-CH family. As to quaternary structure, homodimer. Mg(2+) serves as cofactor. Zn(2+) is required as a cofactor.

The protein localises to the cytoplasm. The catalysed reaction is 1-(5-phospho-beta-D-ribosyl)-5'-AMP + H2O = 1-(5-phospho-beta-D-ribosyl)-5-[(5-phospho-beta-D-ribosylamino)methylideneamino]imidazole-4-carboxamide. Its pathway is amino-acid biosynthesis; L-histidine biosynthesis; L-histidine from 5-phospho-alpha-D-ribose 1-diphosphate: step 3/9. Catalyzes the hydrolysis of the adenine ring of phosphoribosyl-AMP. In Rhodococcus erythropolis (strain PR4 / NBRC 100887), this protein is Phosphoribosyl-AMP cyclohydrolase.